We begin with the raw amino-acid sequence, 761 residues long: MAVVIRLLGLPFIAGPVDIRHFFTGLTIPDGGVHIIGGEIGEAFIIFATDEDARRAISRSGGFIKDSSVELFLSSKAEMQKTIEMKRTDRVGRGRPGSGTSGVGSLSNIIESVKEEASNSGYGSSINQDAGFHSNGTGHGNLRPRKTRPLKAENPYLFLRGLPYLVNEDDVRVFFSGLCVDGVIFLKHHDGRNNGDAIVKFASCVDASGGLKCHRSFMGSRFIEVMQGSEQQWIEFGGNAVKEGDVLRRSEEHSPPRGINDRHFRKRSHSKSPRRTRSRSPLGFYVHLKNLSLSIDERDLRNFFRGTDLTDEQIRFLYKDENRTRYAFVMFKTLKDYNTALSLHKTVLQYRPVHIDPISRKQMLKFIARYEKKRSGSPERDRPGHVSQKYSQEGNSGQKLCIYIRNFPFDVTKVEVQKFFADFLLAEDDIYLLYDDKGVGLGEALVKFKSEEQAMKAERLNRRRFLGTEVLLRLISEAQMQEFGVNFSLMSSEKMQARSQSRERGDHSQLFDSKDPPVYSVGAFENFKHHIEDLRQLDNFKHPQRDFRQPDRHPPEEFRHSSEDFRFPPEDFRHSPEDFRRPREEDFRRPSEEDFRRPWEEDFRRPPEDDFRHPREEDWRRPLGGLLQSTSGGHPQSISGGHPQSISGARPRSTSGDRPRSISGGRLRSISGAPERKISGTHQMKTSGALPMKTLGTLLMRTSGAPRRKILDALLMRTSGSSQRKTLGKLRRRTLDFLTILDLLVRILGARLMILEVTALL.

Phosphoserine is present on residues Ser98, Ser101, and Ser112. Residue Lys114 forms a Glycyl lysine isopeptide (Lys-Gly) (interchain with G-Cter in SUMO2) linkage. Residues 120-147 (SGYGSSINQDAGFHSNGTGHGNLRPRKT) are disordered. Lys151 participates in a covalent cross-link: Glycyl lysine isopeptide (Lys-Gly) (interchain with G-Cter in SUMO2). The RRM 1 domain maps to 155–230 (PYLFLRGLPY…RFIEVMQGSE (76 aa)). Over residues 247–262 (LRRSEEHSPPRGINDR) the composition is skewed to basic and acidic residues. The disordered stretch occupies residues 247–278 (LRRSEEHSPPRGINDRHFRKRSHSKSPRRTRS). Residues Ser250 and Ser254 each carry the phosphoserine modification. Positions 263–278 (HFRKRSHSKSPRRTRS) are enriched in basic residues. Residue Thr276 is modified to Phosphothreonine. 4 positions are modified to phosphoserine: Ser278, Ser280, Ser292, and Ser294. The RRM 2 domain maps to 284–360 (FYVHLKNLSL…RPVHIDPISR (77 aa)). At Lys319 the chain carries N6-acetyllysine. Residue Lys335 forms a Glycyl lysine isopeptide (Lys-Gly) (interchain with G-Cter in SUMO2) linkage. Over residues 372-384 (KKRSGSPERDRPG) the composition is skewed to basic and acidic residues. The tract at residues 372 to 392 (KKRSGSPERDRPGHVSQKYSQ) is disordered. Ser377 is subject to Phosphoserine. One can recognise an RRM 3 domain in the interval 400 to 477 (LCIYIRNFPF…TEVLLRLISE (78 aa)). Glycyl lysine isopeptide (Lys-Gly) (interchain with G-Cter in SUMO2) cross-links involve residues Lys514 and Lys541. A compositionally biased stretch (basic and acidic residues) spans 538 to 621 (DNFKHPQRDF…RHPREEDWRR (84 aa)). Residues 538-690 (DNFKHPQRDF…THQMKTSGAL (153 aa)) are disordered. Phosphoserine is present on residues Ser575 and Ser591. The span at 627-654 (LQSTSGGHPQSISGGHPQSISGARPRST) shows a compositional bias: polar residues. Low complexity predominate over residues 661 to 672 (SISGGRLRSISG).

The protein is RNA-binding protein 12B (RBM12B) of Pongo abelii (Sumatran orangutan).